The sequence spans 354 residues: Biotin synthase (354 aa).

The region spanning 41–265 (NEVQISRLLS…IMPHSRVRLS (225 aa)) is the Radical SAM core domain. 3 residues coordinate [4Fe-4S] cluster: C56, C60, and C63. The [2Fe-2S] cluster site is built by C100, C131, C191, and R263.

Belongs to the radical SAM superfamily. Biotin synthase family. Homodimer. It depends on [4Fe-4S] cluster as a cofactor. The cofactor is [2Fe-2S] cluster.

It carries out the reaction (4R,5S)-dethiobiotin + (sulfur carrier)-SH + 2 reduced [2Fe-2S]-[ferredoxin] + 2 S-adenosyl-L-methionine = (sulfur carrier)-H + biotin + 2 5'-deoxyadenosine + 2 L-methionine + 2 oxidized [2Fe-2S]-[ferredoxin]. Its pathway is cofactor biosynthesis; biotin biosynthesis; biotin from 7,8-diaminononanoate: step 2/2. Catalyzes the conversion of dethiobiotin (DTB) to biotin by the insertion of a sulfur atom into dethiobiotin via a radical-based mechanism. The sequence is that of Biotin synthase from Shewanella sediminis (strain HAW-EB3).